Consider the following 272-residue polypeptide: Zinc finger protein 32 (272 aa).

The segment covering 50 to 65 (RREKLEQKSPESKALQ) has biased composition (basic and acidic residues). Positions 50–69 (RREKLEQKSPESKALQEDSP) are disordered. 3 C2H2-type zinc fingers span residues 76–98 (YDCQECGKSFRQKGSLTLHERIH), 104–126 (FECTQCGKSFRAKGNLVTHQRIH), and 132–154 (YQCKECGKSFSQRGSLAVHERLH). Residues cysteine 78, cysteine 81, histidine 94, histidine 98, cysteine 106, cysteine 109, histidine 122, histidine 126, serine 140, glutamine 143, glycine 156, tyrosine 160, phenylalanine 197, lysine 200, leucine 213, alanine 217, cysteine 246, cysteine 249, histidine 262, and cysteine 266 each contribute to the Zn(2+) site. C2H2-type zinc fingers lie at residues 160–182 (YECAICQRSFRNQSNLAVHRRVH) and 188–210 (YRCDQCGKAFSQKGSLIVHIRVH). The C2H2-type 6 zinc-finger motif lies at 216–238 (YACSHCRKSFHTRGNCLLHGKVH). The segment at 244–266 (YLCGQCGKSFTQRGSLAVHQRSC) adopts a CCHC-type zinc-finger fold.

The protein belongs to the krueppel C2H2-type zinc-finger protein family.

Its subcellular location is the nucleus. In terms of biological role, may be involved in transcriptional regulation. In Mus musculus (Mouse), this protein is Zinc finger protein 32 (Znf32).